The primary structure comprises 122 residues: Large ribosomal subunit protein uL18 (122 aa).

This sequence belongs to the universal ribosomal protein uL18 family. As to quaternary structure, part of the 50S ribosomal subunit; part of the 5S rRNA/L5/L18/L25 subcomplex. Contacts the 5S and 23S rRNAs.

This is one of the proteins that bind and probably mediate the attachment of the 5S RNA into the large ribosomal subunit, where it forms part of the central protuberance. This chain is Large ribosomal subunit protein uL18, found in Thermosipho melanesiensis (strain DSM 12029 / CIP 104789 / BI429).